The primary structure comprises 222 residues: MSSTTIALLSGGLDSATAAALAREAGHRVIGLSFDYGQRHQRELRAAAEVAQALGLAEHHTINVNLAAWGGSSLTDLDQPVPDQGVQDGVIPSTYVPGRNTVFIALGLSLAEAKGAERLVLGVNAIDYSGYPDCRPDYLDAYQHLADLASRSGREGHGTQLWAPLVEWSKTKIVEEALRLNVPIASTWSCYAGGDHPCGVCDSCRIRDAALREAGRPDLASR.

9–19 (LSGGLDSATAA) serves as a coordination point for ATP. 4 residues coordinate Zn(2+): C190, C198, C201, and C204.

This sequence belongs to the QueC family. Zn(2+) is required as a cofactor.

The catalysed reaction is 7-carboxy-7-deazaguanine + NH4(+) + ATP = 7-cyano-7-deazaguanine + ADP + phosphate + H2O + H(+). Its pathway is purine metabolism; 7-cyano-7-deazaguanine biosynthesis. Functionally, catalyzes the ATP-dependent conversion of 7-carboxy-7-deazaguanine (CDG) to 7-cyano-7-deazaguanine (preQ(0)). This is 7-cyano-7-deazaguanine synthase from Synechococcus sp. (strain RCC307).